We begin with the raw amino-acid sequence, 473 residues long: Cysteine--tRNA ligase (473 aa).

Position 28 (cysteine 28) interacts with Zn(2+). The 'HIGH' region motif lies at 30-40 (VTVYDLCHLGH). Zn(2+) is bound by residues cysteine 213, histidine 238, and glutamate 242. Positions 270–274 (KMSKS) match the 'KMSKS' region motif. Position 273 (lysine 273) interacts with ATP.

This sequence belongs to the class-I aminoacyl-tRNA synthetase family. In terms of assembly, monomer. It depends on Zn(2+) as a cofactor.

Its subcellular location is the cytoplasm. The enzyme catalyses tRNA(Cys) + L-cysteine + ATP = L-cysteinyl-tRNA(Cys) + AMP + diphosphate. The chain is Cysteine--tRNA ligase from Blochmanniella pennsylvanica (strain BPEN).